The chain runs to 541 residues: Formimidoyltransferase-cyclodeaminase (541 aa).

Residues 1 to 181 are formiminotransferase N-subdomain; sequence MAKLVECVPN…GATVTGARTF (181 aa). Residue H82 is the For formimidoyltransferase activity of the active site. Residue 163–172 coordinates folate; the sequence is GPPAFVPQWG. Residues 182 to 326 are formiminotransferase C-subdomain; sequence LIAYNINLLC…PRERIIEYLV (145 aa). The segment at 327–334 is linker; the sequence is QAGQEDKG. Positions 335–541 are cyclodeaminase/cyclohydrolase; that stretch reads LVTKPLGAFV…VLALLEKREA (207 aa). Catalysis depends on D412, which acts as the For cyclodeaminase activity.

It in the C-terminal section; belongs to the cyclodeaminase/cyclohydrolase family. This sequence in the N-terminal section; belongs to the formiminotransferase family. Homooctamer, including four polyglutamate binding sites. The subunits are arranged as a tetramer of dimers, and form a planar ring-shaped structure.

Its subcellular location is the cytoplasm. It is found in the cytosol. The protein localises to the golgi apparatus. It localises to the cytoskeleton. The protein resides in the microtubule organizing center. Its subcellular location is the centrosome. It is found in the centriole. The catalysed reaction is 5-formimidoyltetrahydrofolate + L-glutamate = N-formimidoyl-L-glutamate + (6S)-5,6,7,8-tetrahydrofolate. It carries out the reaction 5-formimidoyltetrahydrofolate + 2 H(+) = (6R)-5,10-methenyltetrahydrofolate + NH4(+). It participates in amino-acid degradation; L-histidine degradation into L-glutamate; L-glutamate from N-formimidoyl-L-glutamate (transferase route): step 1/1. Functionally, folate-dependent enzyme, that displays both transferase and deaminase activity. Serves to channel one-carbon units from formiminoglutamate to the folate pool. Its function is as follows. Binds and promotes bundling of vimentin filaments originating from the Golgi. The polypeptide is Formimidoyltransferase-cyclodeaminase (FTCD) (Gallus gallus (Chicken)).